Reading from the N-terminus, the 846-residue chain is Protein arginine N-methyltransferase 9 (846 aa).

TPR repeat units follow at residues 25–58 (VARS…APEL), 67–100 (QYTL…FPDD), and 101–134 (EVIC…NPDF). 2 SAM-dependent MTase PRMT-type domains span residues 137–466 (AKEN…YLRI) and 530–846 (NIPY…AVKP).

Belongs to the class I-like SAM-binding methyltransferase superfamily. Protein arginine N-methyltransferase family. Found in a complex with PRMT9, SF3B2 and SF3B4. Interacts with SF3B2.

It localises to the cytoplasm. It catalyses the reaction L-arginyl-[protein] + 2 S-adenosyl-L-methionine = N(omega),N(omega)'-dimethyl-L-arginyl-[protein] + 2 S-adenosyl-L-homocysteine + 2 H(+). Arginine methyltransferase that can both catalyze the formation of omega-N monomethylarginine (MMA) and symmetrical dimethylarginine (sDMA). Specifically mediates the symmetrical dimethylation of SF3B2. Involved in the regulation of alternative splicing of pre-mRNA. The sequence is that of Protein arginine N-methyltransferase 9 (Prmt9) from Mus musculus (Mouse).